Consider the following 293-residue polypeptide: Movement protein BC1 (293 aa).

Belongs to the begomovirus movement protein BC1 family. In terms of assembly, binds to dimeric supercoiled plasmid DNA. Post-translationally, phosphorylated.

Its subcellular location is the host cell membrane. It localises to the host microsome membrane. It is found in the host endoplasmic reticulum membrane. In terms of biological role, transports viral genome to neighboring plant cells directly through plasmosdesmata, without any budding. The movement protein allows efficient cell to cell propagation, by bypassing the host cell wall barrier. Begomovirus genome is shuttled out of nucleus by Nuclear shuttle protein (NSP) and the movement protein transports the DNA-NSP complex to cell plasmodesmata and facilitates further movement across the cell wall. This Macroptilium lathyroides (Lima bean) protein is Movement protein BC1.